The sequence spans 1433 residues: Inositol hexakisphosphate and diphosphoinositol-pentakisphosphate kinase 1 (1433 aa).

64–65 is a substrate binding site; it reads KK. ATP-binding positions include Arg145, Lys198, His205, Arg224, 248-251, and 257-259; these read EEFM and DVK. Position 224-225 (224-225) interacts with substrate; it reads RK. Residues Lys259 and Arg273 each contribute to the substrate site. Residues Ser275, Asp320, and 332–334 contribute to the ATP site; that span reads DVN. 337–340 provides a ligand contact to substrate; the sequence is SFVK. Residues 382 to 453 are polyphosphoinositide-binding domain; the sequence is PTTSGTMMEL…VLDITRLLLA (72 aa). The interval 915–1020 is disordered; it reads GVEEEGSAPA…PTEMKQSGLG (106 aa). 2 positions are modified to phosphoserine: Ser944 and Ser987. Over residues 1005-1020 the composition is skewed to polar residues; sequence FSSSRPPTEMKQSGLG. Ser1037 and Ser1073 each carry phosphoserine. Over residues 1134 to 1143 the composition is skewed to polar residues; sequence MHSSQASDNP. Disordered stretches follow at residues 1134-1199 and 1235-1257; these read MHSS…DQPS and EPNQ…VSQP. Phosphoserine occurs at positions 1145 and 1152. The segment covering 1168–1186 has biased composition (low complexity); it reads SSGPSSTVSSAGPSSPTTV. Composition is skewed to polar residues over residues 1187–1199 and 1236–1250; these read DGNS…DQPS and PNQS…TSQP.

It belongs to the histidine acid phosphatase family. VIP1 subfamily. In terms of tissue distribution, widely expressed, with a higher expression in skeletal muscle, heart and brain.

The protein resides in the cytoplasm. It is found in the cytosol. Its subcellular location is the cell membrane. It carries out the reaction 1D-myo-inositol hexakisphosphate + ATP = 1-diphospho-1D-myo-inositol 2,3,4,5,6-pentakisphosphate + ADP. The catalysed reaction is 5-diphospho-1D-myo-inositol 1,2,3,4,6-pentakisphosphate + ATP + H(+) = 1,5-bis(diphospho)-1D-myo-inositol 2,3,4,6-tetrakisphosphate + ADP. Functionally, bifunctional inositol kinase that acts in concert with the IP6K kinases IP6K1, IP6K2 and IP6K3 to synthesize the diphosphate group-containing inositol pyrophosphates diphosphoinositol pentakisphosphate, PP-InsP5, and bis-diphosphoinositol tetrakisphosphate, (PP)2-InsP4. PP-InsP5 and (PP)2-InsP4, also respectively called InsP7 and InsP8, regulate a variety of cellular processes, including apoptosis, vesicle trafficking, cytoskeletal dynamics, exocytosis, insulin signaling and neutrophil activation. Phosphorylates inositol hexakisphosphate (InsP6) at position 1 to produce PP-InsP5 which is in turn phosphorylated by IP6Ks to produce (PP)2-InsP4. Alternatively, phosphorylates PP-InsP5 at position 1, produced by IP6Ks from InsP6, to produce (PP)2-InsP4. Activated when cells are exposed to hyperosmotic stress. The chain is Inositol hexakisphosphate and diphosphoinositol-pentakisphosphate kinase 1 from Homo sapiens (Human).